The chain runs to 341 residues: Putative UPF0607 protein ENSP00000381514 (341 aa).

Residues A78–D89 are compositionally biased toward basic and acidic residues. Disordered regions lie at residues A78–P131 and G216–C282. The span at E108–Y127 shows a compositional bias: polar residues. Positions A243–L252 are enriched in basic residues.

This sequence belongs to the UPF0607 family.

The polypeptide is Putative UPF0607 protein ENSP00000381514 (Homo sapiens (Human)).